The following is a 353-amino-acid chain: Tsukushi (353 aa).

Residues 1-16 (MPWPLLLLLAVSGAQT) form the signal peptide. An LRRNT domain is found at 17 to 58 (TRPCFPGCQCEVETFGLFDSFSLTRVDCSGLGPHIMPVPIPL). LRR repeat units lie at residues 59-80 (DTAHLDLSSNRLEMVNESVLAG), 85-106 (TLAGLDLSHNLLTSISPTAFSR), 109-130 (YLESLDLSHNGLTALPAESFTS), 132-153 (PLSDVNLSHNQLREVSVSAFTT), 159-179 (ALHVDLSHNLIHRLVPHPTRA), 185-206 (TIQSLNLAWNRLHAVPNLRDLP), 207-227 (LRYLSLDGNPLAVIGPGAFAG), 230-249 (GLTHLSLASLQRLPELAPSG), 255-276 (GLQVLDLSGNPKLNWAGAEVFS), and 280-301 (SLQELDLSGTNLVPLPEALLLH). Asn-74 carries N-linked (GlcNAc...) asparagine glycosylation. Residue Asn-137 is glycosylated (N-linked (GlcNAc...) asparagine).

In terms of assembly, interacts with FZD4 (via FZ domain); competes with WNT2B for binding to FZD4, inhibiting Wnt signaling and repressing peripheral eye development. Interacts with TGFB1; the interaction contributes to regulation of the hair cycle. Interacts with netrin. Interacts with CCN2.

It is found in the secreted. Its function is as follows. Contributes to various developmental events and other processes such as wound healing and cholesterol homeostasis through its interactions with multiple signaling pathways. Wnt signaling inhibitor which competes with WNT2B for binding to Wnt receptor FZD4 and represses WNT2B-dependent development of the peripheral eye. Plays a role in regulating the hair cycle by controlling TGFB1 signaling. Required for the development of the anterior commissure in the brain by inhibiting neurite outgrowth. Essential for terminal differentiation of hippocampal neural stem cells. Plays a role in regulating bone elongation and bone mass by modulating growth plate chondrocyte function and overall body size. Required for development of the inner ear through its involvement in stereocilia formation in inner hair cells. Facilitates wound healing by inhibiting secretion of TGFB1 from macrophages which prevents myofibroblast differentiation, maintaining inflammatory cell quiescence. Plays a role in cholesterol homeostasis by reducing circulating high-density lipoprotein cholesterol, lowering cholesterol efflux capacity and decreasing cholesterol-to-bile acid conversion in the liver. In one study, shown to negatively regulate sympathetic innervation in brown fat, leading to reduced energy expenditure. In another study, shown not to affect brown fat thermogenic capacity, body weight gain or glucose homeostasis. This is Tsukushi (TSKU) from Homo sapiens (Human).